The primary structure comprises 123 residues: Small ribosomal subunit protein uS12 (123 aa).

The tract at residues 1 to 30 (MPTIQQLIRKPRQPKVQRSKSQHLQSCPQK) is disordered. The segment covering 9-21 (RKPRQPKVQRSKS) has biased composition (basic residues). Position 89 is a 3-methylthioaspartic acid (Asp-89).

It belongs to the universal ribosomal protein uS12 family. As to quaternary structure, part of the 30S ribosomal subunit. Contacts proteins S8 and S17. May interact with IF1 in the 30S initiation complex.

Its function is as follows. With S4 and S5 plays an important role in translational accuracy. In terms of biological role, interacts with and stabilizes bases of the 16S rRNA that are involved in tRNA selection in the A site and with the mRNA backbone. Located at the interface of the 30S and 50S subunits, it traverses the body of the 30S subunit contacting proteins on the other side and probably holding the rRNA structure together. The combined cluster of proteins S8, S12 and S17 appears to hold together the shoulder and platform of the 30S subunit. The chain is Small ribosomal subunit protein uS12 from Paracoccus denitrificans (strain Pd 1222).